The following is a 571-amino-acid chain: Phosphoenolpyruvate-protein phosphotransferase (571 aa).

Histidine 203 serves as the catalytic Tele-phosphohistidine intermediate. Residues arginine 306 and arginine 342 each coordinate phosphoenolpyruvate. Mg(2+)-binding residues include glutamate 429 and aspartate 453. Residues 452–453 (ND) and arginine 463 contribute to the phosphoenolpyruvate site. Catalysis depends on cysteine 500, which acts as the Proton donor.

The protein belongs to the PEP-utilizing enzyme family. In terms of assembly, homodimer. It depends on Mg(2+) as a cofactor.

It localises to the cytoplasm. It catalyses the reaction L-histidyl-[protein] + phosphoenolpyruvate = N(pros)-phospho-L-histidyl-[protein] + pyruvate. Its function is as follows. General (non sugar-specific) component of the phosphoenolpyruvate-dependent sugar phosphotransferase system (sugar PTS). This major carbohydrate active-transport system catalyzes the phosphorylation of incoming sugar substrates concomitantly with their translocation across the cell membrane. Enzyme I transfers the phosphoryl group from phosphoenolpyruvate (PEP) to the phosphoryl carrier protein (HPr). The sequence is that of Phosphoenolpyruvate-protein phosphotransferase (ptsI) from Chlamydia pneumoniae (Chlamydophila pneumoniae).